The chain runs to 144 residues: MVQKQSMANNNCIFCGIVEGNVKSFKVGENEHAFAFLDAFPVADGHTLVIPKKHAVNYSSTDDESLKAVSLLAKEMALKLQQRLQPAGLNYVVNEGAKAGQEVFHYHMHVVPKYETGLGFCYNVRKTNNRSIEANWELLTKEVD.

In terms of domain architecture, HIT spans 13–120 (IFCGIVEGNV…VPKYETGLGF (108 aa)). A Histidine triad motif motif is present at residues 105 to 109 (HYHMH).

This is an uncharacterized protein from Mycoplasma pneumoniae (strain ATCC 29342 / M129 / Subtype 1) (Mycoplasmoides pneumoniae).